Here is a 1640-residue protein sequence, read N- to C-terminus: Phospholipase D C (1640 aa).

Over residues Ser-122 to Ser-132 the composition is skewed to polar residues. Disordered regions lie at residues Ser-122–Ser-247, His-264–Thr-283, Glu-439–Asn-499, and Asp-521–Glu-541. Low complexity predominate over residues Asn-133–Asn-193. Residues Asp-197–Ser-231 are compositionally biased toward acidic residues. The segment covering Thr-232–Ser-247 has biased composition (polar residues). Low complexity-rich tracts occupy residues His-264–Asn-273 and Thr-467–Asn-499. The span at Asp-521–Asp-534 shows a compositional bias: acidic residues. The PLD phosphodiesterase 1 domain maps to Leu-1009–Arg-1036. Active-site residues include His-1014, Lys-1016, and Asp-1021. Low complexity-rich tracts occupy residues Ile-1149–Asn-1274 and His-1282–Gln-1296. Positions Ile-1149–Arg-1315 are disordered. Over residues Gln-1297 to Tyr-1306 the composition is skewed to basic residues. In terms of domain architecture, PLD phosphodiesterase 2 spans Glu-1460 to Ser-1487. Residues His-1465, Lys-1467, and Asp-1472 contribute to the active site.

This sequence belongs to the phospholipase D family.

The catalysed reaction is a 1,2-diacyl-sn-glycero-3-phosphocholine + H2O = a 1,2-diacyl-sn-glycero-3-phosphate + choline + H(+). Its activity is regulated as follows. Inhibited by butan-1-ol. In terms of biological role, plays a role in cell growth. Hydrolyzes membrane phospholipids, such as PtdCho (phosphatidylcholine), producing the free headgroup and PtdOH (phosphatidic acid; signaling molecule on its own). Involved in the inhibition of actin-based motility and endocytosis. Its inhibition causes complete collapse of F-actin organization. The polypeptide is Phospholipase D C (pldC) (Dictyostelium discoideum (Social amoeba)).